The sequence spans 178 residues: Large ribosomal subunit protein uL6 (178 aa).

This sequence belongs to the universal ribosomal protein uL6 family. As to quaternary structure, part of the 50S ribosomal subunit.

Functionally, this protein binds to the 23S rRNA, and is important in its secondary structure. It is located near the subunit interface in the base of the L7/L12 stalk, and near the tRNA binding site of the peptidyltransferase center. This is Large ribosomal subunit protein uL6 from Methanobrevibacter smithii (strain ATCC 35061 / DSM 861 / OCM 144 / PS).